The sequence spans 496 residues: NAD(P)H-quinone oxidoreductase subunit 2 A, chloroplastic (496 aa).

Helical transmembrane passes span 13–33, 41–61, 83–103, 110–130, 133–153, 168–188, 213–233, 245–265, 279–299, 307–327, 338–358, 380–400, 413–435, and 470–490; these read SILP…IDLL, TFWS…ILLL, IFRF…VDYI, VTEF…LCGA, LISI…LSGY, LLMG…PYGL, VSIA…LVPF, PTPV…ALAT, WHLP…LIAV, MLAY…IAGD, YMLI…SFGL, LSLV…GFFG, LYFL…SRII, and MILC…IIAI.

The protein belongs to the complex I subunit 2 family. In terms of assembly, NDH is composed of at least 16 different subunits, 5 of which are encoded in the nucleus.

It localises to the plastid. The protein resides in the chloroplast thylakoid membrane. It carries out the reaction a plastoquinone + NADH + (n+1) H(+)(in) = a plastoquinol + NAD(+) + n H(+)(out). The catalysed reaction is a plastoquinone + NADPH + (n+1) H(+)(in) = a plastoquinol + NADP(+) + n H(+)(out). NDH shuttles electrons from NAD(P)H:plastoquinone, via FMN and iron-sulfur (Fe-S) centers, to quinones in the photosynthetic chain and possibly in a chloroplast respiratory chain. The immediate electron acceptor for the enzyme in this species is believed to be plastoquinone. Couples the redox reaction to proton translocation, and thus conserves the redox energy in a proton gradient. The sequence is that of NAD(P)H-quinone oxidoreductase subunit 2 A, chloroplastic from Psilotum nudum (Whisk fern).